A 156-amino-acid chain; its full sequence is H/ACA ribonucleoprotein complex subunit NHP2 (156 aa).

Belongs to the eukaryotic ribosomal protein eL8 family. In terms of assembly, component of the small nucleolar ribonucleoprotein particles containing H/ACA-type snoRNAs (H/ACA snoRNPs). The protein component of the H/ACA snoRNP contains CBF5, GAR1, NHP2 and NOP10. The complex contains a stable core composed of CBF5 and NOP10, to which GAR1 and NHP2 subsequently bind. Interacts with SHQ1. Interacts with NAF1.

Its subcellular location is the nucleus. The protein localises to the nucleolus. Functionally, non-catalytic component of the H/ACA small nucleolar ribonucleoprotein (H/ACA snoRNP), which catalyzes pseudouridylation of rRNA and is required for ribosome biogenesis. This involves the isomerization of uridine such that the ribose is subsequently attached to C5, instead of the normal N1. Pseudouridine ('psi') residues may serve to stabilize the conformation of rRNAs. The H/ACA snoRNP complex also mediates pseudouridylation of other types of RNAs. The H/ACA snoRNP complex mediates pseudouridylation at position 93 in U2 snRNA. Essential for growth. Directly binds H/ACA snoRNAs. This is H/ACA ribonucleoprotein complex subunit NHP2 (NHP2) from Saccharomyces cerevisiae (strain ATCC 204508 / S288c) (Baker's yeast).